A 259-amino-acid chain; its full sequence is 5'-nucleotidase SurE (259 aa).

The a divalent metal cation site is built by Asp-8, Asp-9, Ser-40, and Asn-92.

It belongs to the SurE nucleotidase family. It depends on a divalent metal cation as a cofactor.

Its subcellular location is the cytoplasm. It catalyses the reaction a ribonucleoside 5'-phosphate + H2O = a ribonucleoside + phosphate. Nucleotidase that shows phosphatase activity on nucleoside 5'-monophosphates. The protein is 5'-nucleotidase SurE of Xanthomonas oryzae pv. oryzae (strain MAFF 311018).